The primary structure comprises 309 residues: Taste receptor type 2 member 8 (309 aa).

The Extracellular segment spans residues 1–7 (MFSPADN). A helical transmembrane segment spans residues 8–28 (IFIILITGEFILGILGNGYIA). Residues 29 to 50 (LVNWIDWIKKKKISTVDYILTN) lie on the Cytoplasmic side of the membrane. A helical membrane pass occupies residues 51 to 71 (LVIARICLISVMVVNGIVIVL). At 72–82 (NPDVYTKNKQQ) the chain is on the extracellular side. A helical transmembrane segment spans residues 83–103 (IVIFTFWTFANYLNMWITTCL). At 104-131 (NVFYFLKIASSSHPLFLWLKWKIDMVVH) the chain is on the cytoplasmic side. The chain crosses the membrane as a helical span at residues 132-152 (WILLGCFAISLLVSLIAAIVL). Residues 153–184 (SCDYRFHAIAKHKRNITEMFHVSKXPYFEPLT) lie on the Extracellular side of the membrane. Asn167 is a glycosylation site (N-linked (GlcNAc...) asparagine). The chain crosses the membrane as a helical span at residues 185-205 (LFNLFAIVPFIVSLISFFLLV). Topologically, residues 206–239 (RSLWRHTKQIKLYATGSRDPSTEVHVRAIKTMTS) are cytoplasmic. A helical membrane pass occupies residues 240-260 (FIFFFFLYFISSILMTFSYLM). At 261-266 (TKYKLA) the chain is on the extracellular side. The helical transmembrane segment at 267–287 (VEFGEIAAILYPLGHSLILIV) threads the bilayer. Topologically, residues 288–309 (LNNKLRQIFVRMLTCRKIACVI) are cytoplasmic.

Belongs to the G-protein coupled receptor T2R family.

It is found in the membrane. In terms of biological role, receptor that may play a role in the perception of bitterness and is gustducin-linked. May play a role in sensing the chemical composition of the gastrointestinal content. The activity of this receptor may stimulate alpha gustducin, mediate PLC-beta-2 activation and lead to the gating of TRPM5. This Pan paniscus (Pygmy chimpanzee) protein is Taste receptor type 2 member 8 (TAS2R8).